A 280-amino-acid polypeptide reads, in one-letter code: Shikimate dehydrogenase (NADP(+)) (280 aa).

Shikimate contacts are provided by residues 20–22 (TLS) and Thr-67. The active-site Proton acceptor is the Lys-71. The shikimate site is built by Asn-92 and Asp-107. NADP(+)-binding positions include 131-135 (GAGGA), 154-159 (NRTIDK), and Leu-224. Residue Tyr-226 participates in shikimate binding. Gly-247 is an NADP(+) binding site.

The protein belongs to the shikimate dehydrogenase family. In terms of assembly, homodimer.

It carries out the reaction shikimate + NADP(+) = 3-dehydroshikimate + NADPH + H(+). It participates in metabolic intermediate biosynthesis; chorismate biosynthesis; chorismate from D-erythrose 4-phosphate and phosphoenolpyruvate: step 4/7. Its function is as follows. Involved in the biosynthesis of the chorismate, which leads to the biosynthesis of aromatic amino acids. Catalyzes the reversible NADPH linked reduction of 3-dehydroshikimate (DHSA) to yield shikimate (SA). This Carboxydothermus hydrogenoformans (strain ATCC BAA-161 / DSM 6008 / Z-2901) protein is Shikimate dehydrogenase (NADP(+)).